A 332-amino-acid polypeptide reads, in one-letter code: Anthranilate phosphoribosyltransferase (332 aa).

5-phospho-alpha-D-ribose 1-diphosphate contacts are provided by residues glycine 79, 82-83, threonine 87, 89-92, 107-115, and serine 119; these read GD, NIST, and KHGNRSVSS. Glycine 79 is a binding site for anthranilate. Serine 91 is a binding site for Mg(2+). Position 110 (asparagine 110) interacts with anthranilate. Arginine 165 provides a ligand contact to anthranilate. Mg(2+)-binding residues include aspartate 223 and glutamate 224.

This sequence belongs to the anthranilate phosphoribosyltransferase family. Homodimer. Mg(2+) is required as a cofactor.

The catalysed reaction is N-(5-phospho-beta-D-ribosyl)anthranilate + diphosphate = 5-phospho-alpha-D-ribose 1-diphosphate + anthranilate. It participates in amino-acid biosynthesis; L-tryptophan biosynthesis; L-tryptophan from chorismate: step 2/5. Functionally, catalyzes the transfer of the phosphoribosyl group of 5-phosphorylribose-1-pyrophosphate (PRPP) to anthranilate to yield N-(5'-phosphoribosyl)-anthranilate (PRA). The chain is Anthranilate phosphoribosyltransferase from Vibrio vulnificus (strain CMCP6).